Consider the following 164-residue polypeptide: Diphosphoinositol polyphosphate phosphohydrolase 3-alpha (164 aa).

Substrate-binding positions include arginine 9, lysine 17 to arginine 19, and serine 38 to arginine 40. The 128-residue stretch at lysine 17 to lysine 144 folds into the Nudix hydrolase domain. 2 residues coordinate Mg(2+): glycine 49 and glutamate 65. The short motif at glycine 50 to glycine 71 is the Nudix box element. Residue glutamate 68 is the Proton acceptor of the active site. Position 69 (glutamate 69) interacts with Mg(2+). Substrate-binding positions include proline 89–histidine 91, arginine 115, and lysine 133. The tract at residues lysine 144–proline 164 is disordered. Polar residues predominate over residues serine 148–proline 164.

Belongs to the Nudix hydrolase family. DIPP subfamily. Requires Mg(2+) as cofactor. The cofactor is Mn(2+). In terms of tissue distribution, mainly expressed in testis and, at lower level in brain. According to PubMed:12121577, it is widely expressed.

The protein localises to the cytoplasm. It carries out the reaction diphospho-myo-inositol polyphosphate + H2O = myo-inositol polyphosphate + phosphate.. The enzyme catalyses P(1),P(6)-bis(5'-adenosyl) hexaphosphate + H2O = adenosine 5'-pentaphosphate + AMP + 2 H(+). The catalysed reaction is P(1),P(5)-bis(5'-adenosyl) pentaphosphate + H2O = adenosine 5'-tetraphosphate + AMP + 2 H(+). In terms of biological role, cleaves a beta-phosphate from the diphosphate groups in PP-InsP5 (diphosphoinositol pentakisphosphate), suggesting that it may play a role in signal transduction. Also able to catalyze the hydrolysis of dinucleoside oligophosphates, with Ap6A and Ap5A being the preferred substrates. The major reaction products are ADP and p4a from Ap6A and ADP and ATP from Ap5A. Also able to hydrolyze 5-phosphoribose 1-diphosphate. The protein is Diphosphoinositol polyphosphate phosphohydrolase 3-alpha (NUDT10) of Homo sapiens (Human).